The chain runs to 502 residues: MTEKKYIVALDQGTTSSRAVVMDHDANIISVSQREFEQIYPKPGWVEHDPMEIWATQSSTLVEVLAKADISSDQIAAIGITNQRETTILWEKETGKPIYNAIVWQCRRTAEICEHLKRDGLEDYIRSNTGLVIDPYFSGTKVKWILDHVEGSRERARRGELLFGTVDTWLIWKMTQGRVHVTDYTNASRTMLFNIHTLDWDDKMLEVLDIPREMLPEVRRSSEVYGQTNIGGKGGTRIPISGIAGDQQAALFGQLCVKEGMAKNTYGTGCFMLMNTGEKAVKSENGLLTTIACGPTGEVNYALEGAVFMAGASIQWLRDEMKLINDAYDSEYFATKVQNTNGVYVVPAFTGLGAPYWDPYARGAIFGLTRGVNANHIIRATLESIAYQTRDVLEAMQADSGIRLHALRVDGGAVANNFLMQFQSDILGTRVERPEVREVTALGAAYLAGLAVGFWQNLDELQEKAVIEREFRPGIETTERNYRYAGWKKAVKRAMAWEEHDE.

Position 14 (Thr14) interacts with ADP. Thr14, Thr15, and Ser16 together coordinate ATP. Position 14 (Thr14) interacts with sn-glycerol 3-phosphate. Arg18 is an ADP binding site. Positions 84, 85, 136, and 246 each coordinate sn-glycerol 3-phosphate. 5 residues coordinate glycerol: Arg84, Glu85, Tyr136, Asp246, and Gln247. 2 residues coordinate ADP: Thr268 and Gly311. Positions 268, 311, 315, and 412 each coordinate ATP. Residues Gly412 and Asn416 each coordinate ADP.

This sequence belongs to the FGGY kinase family. Homotetramer and homodimer (in equilibrium). Heterodimer with EIIA-Glc. Binds 1 zinc ion per glycerol kinase EIIA-Glc dimer. The zinc ion is important for dimerization.

It carries out the reaction glycerol + ATP = sn-glycerol 3-phosphate + ADP + H(+). Its pathway is polyol metabolism; glycerol degradation via glycerol kinase pathway; sn-glycerol 3-phosphate from glycerol: step 1/1. Its activity is regulated as follows. Activity of this regulatory enzyme is affected by several metabolites. Allosterically and non-competitively inhibited by fructose 1,6-bisphosphate (FBP) and unphosphorylated phosphocarrier protein EIIA-Glc (III-Glc), an integral component of the bacterial phosphotransferase (PTS) system. Its function is as follows. Key enzyme in the regulation of glycerol uptake and metabolism. Catalyzes the phosphorylation of glycerol to yield sn-glycerol 3-phosphate. This is Glycerol kinase from Escherichia coli O8 (strain IAI1).